Reading from the N-terminus, the 226-residue chain is dITP/XTP pyrophosphatase (226 aa).

Residue 14–19 (TGNKDK) coordinates substrate. Mg(2+)-binding residues include glutamate 49 and aspartate 83. Residue aspartate 83 is the Proton acceptor of the active site. Substrate is bound by residues threonine 84, 176–179 (FGYD), lysine 199, and 204–205 (HR).

It belongs to the HAM1 NTPase family. Homodimer. Mg(2+) serves as cofactor.

The catalysed reaction is XTP + H2O = XMP + diphosphate + H(+). It catalyses the reaction dITP + H2O = dIMP + diphosphate + H(+). The enzyme catalyses ITP + H2O = IMP + diphosphate + H(+). Pyrophosphatase that catalyzes the hydrolysis of nucleoside triphosphates to their monophosphate derivatives, with a high preference for the non-canonical purine nucleotides XTP (xanthosine triphosphate), dITP (deoxyinosine triphosphate) and ITP. Seems to function as a house-cleaning enzyme that removes non-canonical purine nucleotides from the nucleotide pool, thus preventing their incorporation into DNA/RNA and avoiding chromosomal lesions. This is dITP/XTP pyrophosphatase from Chlorobaculum tepidum (strain ATCC 49652 / DSM 12025 / NBRC 103806 / TLS) (Chlorobium tepidum).